Reading from the N-terminus, the 246-residue chain is Acetoacetate decarboxylase (246 aa).

The Schiff-base intermediate with acetoacetate role is filled by Lys116.

This sequence belongs to the ADC family.

The enzyme catalyses acetoacetate + H(+) = acetone + CO2. In terms of biological role, catalyzes the conversion of acetoacetate to acetone and carbon dioxide. This chain is Acetoacetate decarboxylase, found in Bordetella avium (strain 197N).